A 375-amino-acid polypeptide reads, in one-letter code: MSTAGKVIKCKAAVLWEVKKPFSIEDVEVAPPKAYEVRIKMVAVGICRTDDHVVSGNLVTPLPAILGHEAAGIVESVGEGVTTVKPGDKVIPLFTPQCGKCRVCKNPESNYCLKNDLGNPRGTLQDGTRRFTCRGKPIHHFLGTSTFSQYTVVDENAVAKIDAASPLEKVCLIGCGFSTGYGSAVNVAKVTPGSTCAVFGLGGVGLSAVMGCKAAGAARIIAVDINKDKFAKAKELGATECINPQDYKKPIQEVLKEMTDGGVDFSFEVIGRLDTMMASLLCCHEACGTSVIVGVPPASQNLSINPMLLLTGRTWKGAVYGGFKSKEGIPKLVADFMAKKFSLDALITHVLPFEKINEGFDLLHSGKSIRTVLTF.

An N-acetylserine modification is found at Ser-2. Ser-23 is modified (phosphoserine). Phosphotyrosine is present on Tyr-35. Positions 47, 68, 98, 101, 104, 112, and 175 each coordinate Zn(2+). NAD(+)-binding positions include 200-205 (GLGGVG), Asp-224, Lys-229, 293-295 (VGV), and Arg-370.

This sequence belongs to the zinc-containing alcohol dehydrogenase family. As to quaternary structure, homodimer or heterodimer of closely related subunits. The cofactor is Zn(2+).

The protein resides in the cytoplasm. It catalyses the reaction all-trans-retinol + NAD(+) = all-trans-retinal + NADH + H(+). The enzyme catalyses all-trans-4-hydroxyretinol + NAD(+) = all-trans-4-hydroxyretinal + NADH + H(+). The catalysed reaction is all-trans-4-oxoretinol + NAD(+) = all-trans-4-oxoretinal + NADH + H(+). Catalyzes the NAD-dependent oxidation of all-trans-retinol and its derivatives such as all-trans-4-hydroxyretinol and may participate in retinoid metabolism. In vitro can also catalyze the NADH-dependent reduction of all-trans-retinal and its derivatives such as all-trans-4-oxoretinal. Catalyzes in the oxidative direction with higher efficiency. Has the same affinity for all-trans-4-hydroxyretinol and all-trans-4-oxoretinal. This chain is All-trans-retinol dehydrogenase [NAD(+)] ADH1B, found in Pan troglodytes (Chimpanzee).